Reading from the N-terminus, the 548-residue chain is Frizzled-7 (548 aa).

Residues Met-1–Ala-19 form the signal peptide. Residues Gln-20–Trp-230 are Extracellular-facing. The region spanning Pro-31–Gln-150 is the FZ domain. 5 disulfides stabilise this stretch: Cys-36–Cys-97, Cys-44–Cys-90, Cys-81–Cys-118, Cys-107–Cys-147, and Cys-111–Cys-135. Asn-50 carries N-linked (GlcNAc...) asparagine glycosylation. N-linked (GlcNAc...) asparagine glycosylation is present at Asn-151. The chain crosses the membrane as a helical span at residues Val-231–Val-251. Residues Asp-252–Pro-262 lie on the Cytoplasmic side of the membrane. Residues Ile-263–Leu-283 traverse the membrane as a helical segment. Residues Glu-284–Cys-310 lie on the Extracellular side of the membrane. A helical membrane pass occupies residues Thr-311–Leu-331. Residues Ser-332–Gln-353 lie on the Cytoplasmic side of the membrane. The chain crosses the membrane as a helical span at residues Tyr-354 to Gly-374. Over Gln-375 to Gly-397 the chain is Extracellular. A helical membrane pass occupies residues Phe-398–Phe-418. The Cytoplasmic portion of the chain corresponds to Val-419–Arg-444. The chain crosses the membrane as a helical span at residues Ile-445–Tyr-465. Residues Glu-466–Thr-502 lie on the Extracellular side of the membrane. A helical transmembrane segment spans residues Val-503–Trp-523. Over Ser-524 to Val-548 the chain is Cytoplasmic. The Lys-Thr-X-X-X-Trp motif, mediates interaction with the PDZ domain of Dvl family members signature appears at Lys-526–Trp-531. Residues Thr-546–Val-548 carry the PDZ-binding motif.

Belongs to the G-protein coupled receptor Fz/Smo family. In terms of assembly, interacts with wnt11 and sdc4. The extracellular domain interacts with the extracellular domain of pcdh8/papc.

It localises to the cell membrane. Its subcellular location is the endosome membrane. In terms of biological role, receptor for Wnt proteins. Acts in both canonical and non-canonical Wnt pathways. Although different papers report differing Wnt preferences, wnt5a, wnt8b and wnt11 have been proposed as synergists. In the canonical Wnt pathway, acts via beta-catenin to promote the expression of the dorsal genes siamois, twin and nodal3 and to establish the dorsal axis of the embryo and induce dorsal mesoderm formation. In a non-canonical Wnt/planar cell polarity (PCP) pathway, acts with sdc4 and dvl2/dsh to regulate convergent extension movements in gastrulation. Triggers phosphorylation of dvl2/dsh and its translocation to the plasma membrane. In a third branch of Wnt signaling, acts in a non-canonical pathway via trimeric G proteins, and independently of dvl2/dsh, to recruit protein kinase C (PKC) to the membrane and thus activate PKC. PKC signaling controls cell sorting and tissue separation during gastrulation. This chain is Frizzled-7, found in Xenopus tropicalis (Western clawed frog).